Consider the following 510-residue polypeptide: Bifunctional purine biosynthesis protein PurH (510 aa).

One can recognise an MGS-like domain in the interval 1–144 (MSKRALISVT…KNYKDVIVVV (144 aa)).

The protein belongs to the PurH family.

The enzyme catalyses (6R)-10-formyltetrahydrofolate + 5-amino-1-(5-phospho-beta-D-ribosyl)imidazole-4-carboxamide = 5-formamido-1-(5-phospho-D-ribosyl)imidazole-4-carboxamide + (6S)-5,6,7,8-tetrahydrofolate. It catalyses the reaction IMP + H2O = 5-formamido-1-(5-phospho-D-ribosyl)imidazole-4-carboxamide. Its pathway is purine metabolism; IMP biosynthesis via de novo pathway; 5-formamido-1-(5-phospho-D-ribosyl)imidazole-4-carboxamide from 5-amino-1-(5-phospho-D-ribosyl)imidazole-4-carboxamide (10-formyl THF route): step 1/1. The protein operates within purine metabolism; IMP biosynthesis via de novo pathway; IMP from 5-formamido-1-(5-phospho-D-ribosyl)imidazole-4-carboxamide: step 1/1. The polypeptide is Bifunctional purine biosynthesis protein PurH (Clostridioides difficile (strain 630) (Peptoclostridium difficile)).